The sequence spans 63 residues: DNA gyrase inhibitor YacG (63 aa).

Residues Cys9, Cys12, Cys28, and Cys32 each coordinate Zn(2+).

This sequence belongs to the DNA gyrase inhibitor YacG family. Interacts with GyrB. It depends on Zn(2+) as a cofactor.

Inhibits all the catalytic activities of DNA gyrase by preventing its interaction with DNA. Acts by binding directly to the C-terminal domain of GyrB, which probably disrupts DNA binding by the gyrase. This Salmonella arizonae (strain ATCC BAA-731 / CDC346-86 / RSK2980) protein is DNA gyrase inhibitor YacG.